A 93-amino-acid chain; its full sequence is DNA/RNA-binding protein Alba (93 aa).

Residue Lys11 is modified to N6-acetyllysine.

It belongs to the histone-like Alba family. Acetylated. Acetylation at Lys-11 decreases DNA-binding affinity.

The protein resides in the cytoplasm. The protein localises to the chromosome. Its function is as follows. Binds double-stranded DNA tightly but without sequence specificity. Involved in DNA compaction. The sequence is that of DNA/RNA-binding protein Alba from Pyrococcus furiosus (strain ATCC 43587 / DSM 3638 / JCM 8422 / Vc1).